Here is a 273-residue protein sequence, read N- to C-terminus: Transposable element Tcb2 transposase (273 aa).

The protein belongs to the transposase 5 family.

Its subcellular location is the nucleus. In terms of biological role, probably essential for transposable element Tcb2 transposition. The protein is Transposable element Tcb2 transposase of Caenorhabditis briggsae.